Here is a 124-residue protein sequence, read N- to C-terminus: Cytochrome c oxidase subunit 4 isoform 1, mitochondrial (124 aa).

K4 carries the N6-acetyllysine; alternate modification. K4 carries the N6-succinyllysine; alternate modification. 2 positions are modified to phosphoserine: S31 and S33. Position 35 is an N6-acetyllysine; alternate (K35). K35 bears the N6-succinyllysine; alternate mark. K42 bears the N6-acetyllysine mark.

It belongs to the cytochrome c oxidase IV family. Component of the cytochrome c oxidase (complex IV, CIV), a multisubunit enzyme composed of 14 subunits. The complex is composed of a catalytic core of 3 subunits MT-CO1, MT-CO2 and MT-CO3, encoded in the mitochondrial DNA, and 11 supernumerary subunits COX4I, COX5A, COX5B, COX6A, COX6B, COX6C, COX7A, COX7B, COX7C, COX8 and NDUFA4, which are encoded in the nuclear genome. The complex exists as a monomer or a dimer and forms supercomplexes (SCs) in the inner mitochondrial membrane with NADH-ubiquinone oxidoreductase (complex I, CI) and ubiquinol-cytochrome c oxidoreductase (cytochrome b-c1 complex, complex III, CIII), resulting in different assemblies (supercomplex SCI(1)III(2)IV(1) and megacomplex MCI(2)III(2)IV(2)). Interacts with PHB2; the interaction decreases in absence of SPHK2. Interacts with AFG1L. Interacts with ABCB7; this interaction allows the regulation of cellular iron homeostasis and cellular reactive oxygen species (ROS) levels in cardiomyocytes. Interacts with FLVCR2; this interaction occurs in the absence of heme and is disrupted upon heme binding. Interacts with IRGC.

Its subcellular location is the mitochondrion inner membrane. Its pathway is energy metabolism; oxidative phosphorylation. Functionally, component of the cytochrome c oxidase, the last enzyme in the mitochondrial electron transport chain which drives oxidative phosphorylation. The respiratory chain contains 3 multisubunit complexes succinate dehydrogenase (complex II, CII), ubiquinol-cytochrome c oxidoreductase (cytochrome b-c1 complex, complex III, CIII) and cytochrome c oxidase (complex IV, CIV), that cooperate to transfer electrons derived from NADH and succinate to molecular oxygen, creating an electrochemical gradient over the inner membrane that drives transmembrane transport and the ATP synthase. Cytochrome c oxidase is the component of the respiratory chain that catalyzes the reduction of oxygen to water. Electrons originating from reduced cytochrome c in the intermembrane space (IMS) are transferred via the dinuclear copper A center (CU(A)) of subunit 2 and heme A of subunit 1 to the active site in subunit 1, a binuclear center (BNC) formed by heme A3 and copper B (CU(B)). The BNC reduces molecular oxygen to 2 water molecules using 4 electrons from cytochrome c in the IMS and 4 protons from the mitochondrial matrix. The protein is Cytochrome c oxidase subunit 4 isoform 1, mitochondrial (COX4I1) of Saimiri sciureus (Common squirrel monkey).